Here is a 1266-residue protein sequence, read N- to C-terminus: Neuronal-glial cell adhesion molecule (1266 aa).

Residues 1 to 20 (MALPMVGLLLLLLLGGPGAA) form the signal peptide. The Extracellular portion of the chain corresponds to 21–1130 (ITIPPEYGAH…PQPGGGVCTK (1110 aa)). Ig-like C2-type domains lie at 36-128 (PELT…NVIA), 135-221 (PKEK…KEPL), 236-322 (PRLL…HSVT), 327-413 (PYWV…AFLH), 418-506 (PLRM…ALLE), and 510-597 (PTRI…AQLR). Cystine bridges form between Cys-58–Cys-110, Cys-154–Cys-205, Cys-260–Cys-306, and Cys-348–Cys-397. A glycan (N-linked (GlcNAc...) asparagine) is linked at Asn-97. Asn-288, Asn-390, Asn-434, Asn-472, and Asn-498 each carry an N-linked (GlcNAc...) asparagine glycan. Cys-441 and Cys-490 are disulfide-bonded. Cysteines 532 and 581 form a disulfide. Fibronectin type-III domains are found at residues 603–698 (PSRD…TPPA), 700–804 (PERN…SGED), 809–930 (YPEN…TPEG), 934–1021 (PPEE…TKPE), and 1022–1118 (PPSP…TNGT). The disordered stretch occupies residues 685–710 (EHHAPSAPIETPPAAPERNPGGVHGE). N-linked (GlcNAc...) asparagine glycosylation is found at Asn-712 and Asn-819. Residues 857–882 (SRRQAPPDPPQIPQSPAEDPPPFPPV) form a disordered region. Over residues 862 to 881 (PPDPPQIPQSPAEDPPPFPP) the composition is skewed to pro residues. A Cell attachment site motif is present at residues 914–916 (RGD). The segment at 1004–1025 (STPRERPALQTVGSTKPEPPSP) is disordered. Residues Asn-1061, Asn-1075, Asn-1100, and Asn-1116 are each glycosylated (N-linked (GlcNAc...) asparagine). The chain crosses the membrane as a helical span at residues 1131–1153 (GWFIGFVSSVVLLLLILLILCFI). Topologically, residues 1154–1266 (KRSKGGKYSV…ASPCAGPPLD (113 aa)) are cytoplasmic. The span at 1163–1195 (VKDKEDTQVDSEARPMKDETFGEYRSLESEAEK) shows a compositional bias: basic and acidic residues. The tract at residues 1163–1266 (VKDKEDTQVD…ASPCAGPPLD (104 aa)) is disordered. Residues 1199–1211 (SGSGAGSGVGSPG) are compositionally biased toward gly residues.

Belongs to the immunoglobulin superfamily. L1/neurofascin/NgCAM family. As to quaternary structure, binds to itself and to axonin 1. As to expression, brain.

The protein localises to the cell membrane. Functionally, mediates the adhesion of neurons to neurons and neurons to glia. It is involved in neuronal migration, neurite fasciculation and outgrowth. This Gallus gallus (Chicken) protein is Neuronal-glial cell adhesion molecule.